Consider the following 1088-residue polypeptide: Methionine S-methyltransferase (1088 aa).

It belongs to the class I-like SAM-binding methyltransferase superfamily. As to quaternary structure, homotetramer.

It is found in the cytoplasm. It catalyses the reaction L-methionine + S-adenosyl-L-methionine = S-methyl-L-methionine + S-adenosyl-L-homocysteine. Catalyzes the S-methylmethionine (SMM) biosynthesis from adenosyl-L-homocysteine (AdoMet) and methionine. SMM biosynthesis (by MMT1) and degradation (by HMT-1, HMT-2 and HMT-3) constitute the SMM cycle in plants, which is probably required to achieve short term control of AdoMet level. Also able to catalyze the selenium-methylmethionine (SeMM) from AdoMet and selenium-methionine (SeMet). May play a role in phoem sulfur transport; such function is however not essential. This is Methionine S-methyltransferase (MMT1) from Wollastonia biflora (Beach sunflower).